The chain runs to 514 residues: Glycosyltransferase-like At3g57200 (514 aa).

The segment at 1–23 (MAGLYSSSSSSKPTLSSSPSSSS) is disordered. Residues 1–39 (MAGLYSSSSSSKPTLSSSPSSSSSSRLFLLVTLLPLSLA) form the signal peptide. N-linked (GlcNAc...) asparagine glycosylation is found at Asn-156, Asn-187, Asn-251, and Asn-460. Residues 457–514 (PSKNSSTADSTSGITRESSQETGKRRVLEFHLDVDGESQASAVPPQSPPGLEATQMEL) are disordered. Residues 458 to 473 (SKNSSTADSTSGITRE) are compositionally biased toward polar residues. Residues 474 to 490 (SSQETGKRRVLEFHLDV) are compositionally biased toward basic and acidic residues.

Belongs to the glycosyltransferase 25 family.

The protein localises to the secreted. It is found in the cell wall. The protein resides in the cytoplasm. Its subcellular location is the cell membrane. In terms of biological role, involved in the coordination between cell elongation and cellulose synthesis by promoting the expression of genes involved in cell elongation and cellulose synthesis. Acts as a regulator of plasmodesmatal permeability. Maybe a glycosyltransferase. In Arabidopsis thaliana (Mouse-ear cress), this protein is Glycosyltransferase-like At3g57200.